A 303-amino-acid chain; its full sequence is Tyrosine recombinase XerC (303 aa).

Residues 3–89 form the Core-binding (CB) domain; the sequence is IQNDQWVSAF…TLRSFYQFLV (87 aa). Residues 110–297 form the Tyr recombinase domain; it reads KLPSFLYEEE…TKDRLRDVYR (188 aa). Residues Arg-150, Lys-174, His-249, Arg-252, and His-275 contribute to the active site. The active-site O-(3'-phospho-DNA)-tyrosine intermediate is the Tyr-284.

This sequence belongs to the 'phage' integrase family. XerC subfamily. In terms of assembly, forms a cyclic heterotetrameric complex composed of two molecules of XerC and two molecules of XerD.

The protein resides in the cytoplasm. Functionally, site-specific tyrosine recombinase, which acts by catalyzing the cutting and rejoining of the recombining DNA molecules. The XerC-XerD complex is essential to convert dimers of the bacterial chromosome into monomers to permit their segregation at cell division. It also contributes to the segregational stability of plasmids. In Halalkalibacterium halodurans (strain ATCC BAA-125 / DSM 18197 / FERM 7344 / JCM 9153 / C-125) (Bacillus halodurans), this protein is Tyrosine recombinase XerC.